We begin with the raw amino-acid sequence, 381 residues long: Probable serine/threonine-protein kinase PBL21 (381 aa).

The S-palmitoyl cysteine moiety is linked to residue cysteine 3. The region spanning 78-354 (FREVNLLGEG…GDIVVALEYL (277 aa)) is the Protein kinase domain. ATP is bound by residues 84–92 (LGEGGFGRV) and lysine 106. Residue aspartate 204 is the Proton acceptor of the active site. Positions 362–381 (EARNVSSPSPEISRTPRRDL) are disordered.

This sequence belongs to the protein kinase superfamily. Ser/Thr protein kinase family. In terms of processing, palmitoylation at Cys-3 and Cys-7 are required for plasma membrane location.

It is found in the cell membrane. The catalysed reaction is L-seryl-[protein] + ATP = O-phospho-L-seryl-[protein] + ADP + H(+). The enzyme catalyses L-threonyl-[protein] + ATP = O-phospho-L-threonyl-[protein] + ADP + H(+). In terms of biological role, may be involved in plant defense signaling. The protein is Probable serine/threonine-protein kinase PBL21 of Arabidopsis thaliana (Mouse-ear cress).